We begin with the raw amino-acid sequence, 118 residues long: Large ribosomal subunit protein uL23c (118 aa).

Belongs to the universal ribosomal protein uL23 family. As to quaternary structure, part of the 50S ribosomal subunit.

It localises to the plastid. Its subcellular location is the chloroplast. Functionally, binds to 23S rRNA. The protein is Large ribosomal subunit protein uL23c (rpl23) of Stigeoclonium helveticum (Green alga).